We begin with the raw amino-acid sequence, 471 residues long: Putative multidrug resistance protein MdtD (471 aa).

At 1 to 11 (MTDLPDSTRWQ) the chain is on the periplasmic side. A helical transmembrane segment spans residues 12–32 (LWIVAFGFFMQSLDTTIVNTA). At 33–48 (LPSMAQSLGESPLHMH) the chain is on the cytoplasmic side. A helical membrane pass occupies residues 49–69 (MVIVSYVLTVAVMLPASGWLA). Over 70–76 (DKVGVRN) the chain is Periplasmic. The helical transmembrane segment at 77–97 (IFFTAIVLFTLGSLFCALSGT) threads the bilayer. Residues 98-101 (LNEL) are Cytoplasmic-facing. The chain crosses the membrane as a helical span at residues 102 to 124 (LLARALQGVGGAMMVPVGRLTVM). Residues 125 to 137 (KIVPREQYMAAMT) lie on the Periplasmic side of the membrane. Residues 138–158 (FVTLPGQIGPLLGPALGGLLV) traverse the membrane as a helical segment. Topologically, residues 159–164 (EYASWH) are cytoplasmic. Residues 165 to 185 (WIFLINIPVGIIGAIATLMLM) form a helical membrane-spanning segment. Residues 186 to 196 (PNYTMQTRRFD) lie on the Periplasmic side of the membrane. The helical transmembrane segment at 197 to 217 (LSGFLLLAVGMAVLTLALDGS) threads the bilayer. Over 218–224 (KGTGFSP) the chain is Cytoplasmic. A helical transmembrane segment spans residues 225-245 (LAIAGLVAVGVVALVLYLLHA). Residues 246–262 (QNNNRALFSLKLFRTRT) lie on the Periplasmic side of the membrane. Residues 263–283 (FSLGLAGSFAGRIGSGMLPFM) traverse the membrane as a helical segment. The Cytoplasmic portion of the chain corresponds to 284-285 (TP). A helical transmembrane segment spans residues 286–306 (VFLQIGLGFSPFHAGLMMIPM). Residues 307–341 (VLGSMGMKRIVVQVVNRFGYRWVLVATTLGLSLVT) lie on the Periplasmic side of the membrane. Residues 342–362 (LLFMTTALLGWYYVLPFVLFL) traverse the membrane as a helical segment. Residues 363–395 (QGMVNSTRFSSMNTLTLKDLPDNLASSGNSLLS) lie on the Cytoplasmic side of the membrane. Residues 396 to 416 (MIMQLSMSIGVTIAGLLLGLF) traverse the membrane as a helical segment. Residues 417–430 (GSQHVSVDSGTTQT) lie on the Periplasmic side of the membrane. The chain crosses the membrane as a helical span at residues 431–451 (VFMYTWLSMAFIIALPAFVFA). At 452–471 (RVPSDTHQNVAISRRKRSAQ) the chain is on the cytoplasmic side.

This sequence belongs to the major facilitator superfamily. TCR/Tet family.

It localises to the cell inner membrane. In Escherichia coli O81 (strain ED1a), this protein is Putative multidrug resistance protein MdtD.